A 176-amino-acid polypeptide reads, in one-letter code: MLRFLNQCSHGRGAWLLMAFTALALELTALWFQHVMLLKPCVLCIYERCALFGVLGAALIGAIAPKTPLRYVAMVIWLYSAFRGVQLTYEHTMLQLYPSPFATCDFMARFPEWLPLDKWVPQVFVASGDCAERQWEFLGLEMPQWLLGIFIAYLIVAVLVVISQPFKAKKRDLFGR.

The Cytoplasmic segment spans residues 1–14 (MLRFLNQCSHGRGA). The helical transmembrane segment at 15 to 31 (WLLMAFTALALELTALW) threads the bilayer. Residues 32-49 (FQHVMLLKPCVLCIYERC) lie on the Periplasmic side of the membrane. Cysteines 41 and 44 form a disulfide. The helical transmembrane segment at 50 to 65 (ALFGVLGAALIGAIAP) threads the bilayer. Residues 66-71 (KTPLRY) lie on the Cytoplasmic side of the membrane. Residues 72–89 (VAMVIWLYSAFRGVQLTY) traverse the membrane as a helical segment. At 90–144 (EHTMLQLYPSPFATCDFMARFPEWLPLDKWVPQVFVASGDCAERQWEFLGLEMPQ) the chain is on the periplasmic side. Cysteines 104 and 130 form a disulfide. Residues 145–163 (WLLGIFIAYLIVAVLVVIS) traverse the membrane as a helical segment. Residues 164–176 (QPFKAKKRDLFGR) lie on the Cytoplasmic side of the membrane.

It belongs to the DsbB family.

The protein localises to the cell inner membrane. Its function is as follows. Required for disulfide bond formation in some periplasmic proteins. Acts by oxidizing the DsbA protein. This Escherichia coli O6:K15:H31 (strain 536 / UPEC) protein is Disulfide bond formation protein B.